The primary structure comprises 428 residues: 3-phosphoshikimate 1-carboxyvinyltransferase (428 aa).

Lysine 20, serine 21, and arginine 25 together coordinate 3-phosphoshikimate. Lysine 20 lines the phosphoenolpyruvate pocket. Phosphoenolpyruvate-binding residues include glycine 92 and arginine 120. 3-phosphoshikimate is bound by residues serine 166, glutamine 168, aspartate 314, and lysine 341. Position 168 (glutamine 168) interacts with phosphoenolpyruvate. Aspartate 314 functions as the Proton acceptor in the catalytic mechanism. 2 residues coordinate phosphoenolpyruvate: arginine 345 and arginine 387.

The protein belongs to the EPSP synthase family. Monomer.

The protein resides in the cytoplasm. The catalysed reaction is 3-phosphoshikimate + phosphoenolpyruvate = 5-O-(1-carboxyvinyl)-3-phosphoshikimate + phosphate. The protein operates within metabolic intermediate biosynthesis; chorismate biosynthesis; chorismate from D-erythrose 4-phosphate and phosphoenolpyruvate: step 6/7. In terms of biological role, catalyzes the transfer of the enolpyruvyl moiety of phosphoenolpyruvate (PEP) to the 5-hydroxyl of shikimate-3-phosphate (S3P) to produce enolpyruvyl shikimate-3-phosphate and inorganic phosphate. The polypeptide is 3-phosphoshikimate 1-carboxyvinyltransferase (Listeria innocua serovar 6a (strain ATCC BAA-680 / CLIP 11262)).